The chain runs to 139 residues: Ribulose bisphosphate carboxylase small subunit (139 aa).

Belongs to the RuBisCO small chain family. Heterohexadecamer of 8 large and 8 small subunits.

It localises to the plastid. It is found in the chloroplast. In terms of biological role, ruBisCO catalyzes two reactions: the carboxylation of D-ribulose 1,5-bisphosphate, the primary event in carbon dioxide fixation, as well as the oxidative fragmentation of the pentose substrate in the photorespiration process. Both reactions occur simultaneously and in competition at the same active site. Although the small subunit is not catalytic it is essential for maximal activity. The protein is Ribulose bisphosphate carboxylase small subunit of Thalassiosira nordenskioeldii (Marine diatom).